The chain runs to 341 residues: Dihydroorotate dehydrogenase (quinone) (341 aa).

Residues 61 to 65 (AGLDK) and Thr85 each bind FMN. Lys65 contacts substrate. 110–114 (NRMGF) is a binding site for substrate. Residues Asn138 and Asn171 each coordinate FMN. Asn171 lines the substrate pocket. Ser174 (nucleophile) is an active-site residue. Substrate is bound at residue Asn176. Residues Lys216 and Thr244 each coordinate FMN. A substrate-binding site is contributed by 245–246 (NT). Residues Gly267, Gly296, and 317–318 (YS) contribute to the FMN site.

Belongs to the dihydroorotate dehydrogenase family. Type 2 subfamily. As to quaternary structure, monomer. Requires FMN as cofactor.

The protein localises to the cell membrane. The enzyme catalyses (S)-dihydroorotate + a quinone = orotate + a quinol. The protein operates within pyrimidine metabolism; UMP biosynthesis via de novo pathway; orotate from (S)-dihydroorotate (quinone route): step 1/1. Functionally, catalyzes the conversion of dihydroorotate to orotate with quinone as electron acceptor. This Pseudomonas fluorescens (strain SBW25) protein is Dihydroorotate dehydrogenase (quinone).